The chain runs to 447 residues: N-succinylarginine dihydrolase (447 aa).

Substrate-binding positions include 19 to 28 (AGLSFGNEAS), asparagine 110, and 137 to 138 (HR). The active site involves glutamate 174. Arginine 212 provides a ligand contact to substrate. The active site involves histidine 248. The substrate site is built by aspartate 250 and asparagine 359. Cysteine 365 serves as the catalytic Nucleophile.

Belongs to the succinylarginine dihydrolase family. Homodimer.

The enzyme catalyses N(2)-succinyl-L-arginine + 2 H2O + 2 H(+) = N(2)-succinyl-L-ornithine + 2 NH4(+) + CO2. The protein operates within amino-acid degradation; L-arginine degradation via AST pathway; L-glutamate and succinate from L-arginine: step 2/5. In terms of biological role, catalyzes the hydrolysis of N(2)-succinylarginine into N(2)-succinylornithine, ammonia and CO(2). In Salmonella enteritidis PT4 (strain P125109), this protein is N-succinylarginine dihydrolase.